Here is a 471-residue protein sequence, read N- to C-terminus: Glutamate--tRNA ligase (471 aa).

The 'HIGH' region motif lies at 9-19 (PSPTGYLHVGG). Residues Cys-98, Cys-100, Cys-125, and His-127 each contribute to the Zn(2+) site. The 'KMSKS' region signature appears at 237–241 (KLSKR). Position 240 (Lys-240) interacts with ATP.

It belongs to the class-I aminoacyl-tRNA synthetase family. Glutamate--tRNA ligase type 1 subfamily. As to quaternary structure, monomer. Zn(2+) is required as a cofactor.

It localises to the cytoplasm. The catalysed reaction is tRNA(Glu) + L-glutamate + ATP = L-glutamyl-tRNA(Glu) + AMP + diphosphate. Catalyzes the attachment of glutamate to tRNA(Glu) in a two-step reaction: glutamate is first activated by ATP to form Glu-AMP and then transferred to the acceptor end of tRNA(Glu). In Salmonella dublin (strain CT_02021853), this protein is Glutamate--tRNA ligase.